Here is a 589-residue protein sequence, read N- to C-terminus: Arginine--tRNA ligase (589 aa).

A 'HIGH' region motif is present at residues 132 to 142; that stretch reads PNTNKPLHVGH.

It belongs to the class-I aminoacyl-tRNA synthetase family. Monomer.

It localises to the cytoplasm. It carries out the reaction tRNA(Arg) + L-arginine + ATP = L-arginyl-tRNA(Arg) + AMP + diphosphate. This chain is Arginine--tRNA ligase, found in Treponema pallidum subsp. pallidum (strain SS14).